Reading from the N-terminus, the 348-residue chain is Ferredoxin--NADP reductase 1 (348 aa).

FAD-binding residues include E36, K44, Y48, I88, P123, D285, and S326. The segment at 329–348 is disordered; it reads EKFKKKNEQLKQEKQAQLMN.

The protein belongs to the ferredoxin--NADP reductase type 2 family. In terms of assembly, homodimer. The cofactor is FAD.

The catalysed reaction is 2 reduced [2Fe-2S]-[ferredoxin] + NADP(+) + H(+) = 2 oxidized [2Fe-2S]-[ferredoxin] + NADPH. The polypeptide is Ferredoxin--NADP reductase 1 (Shouchella clausii (strain KSM-K16) (Alkalihalobacillus clausii)).